Consider the following 110-residue polypeptide: Large ribosomal subunit protein uL22 (110 aa).

Belongs to the universal ribosomal protein uL22 family. In terms of assembly, part of the 50S ribosomal subunit.

Its function is as follows. This protein binds specifically to 23S rRNA; its binding is stimulated by other ribosomal proteins, e.g. L4, L17, and L20. It is important during the early stages of 50S assembly. It makes multiple contacts with different domains of the 23S rRNA in the assembled 50S subunit and ribosome. Functionally, the globular domain of the protein is located near the polypeptide exit tunnel on the outside of the subunit, while an extended beta-hairpin is found that lines the wall of the exit tunnel in the center of the 70S ribosome. The sequence is that of Large ribosomal subunit protein uL22 from Salmonella arizonae (strain ATCC BAA-731 / CDC346-86 / RSK2980).